The following is a 355-amino-acid chain: N6-mAMP deaminase (355 aa).

Positions 13 and 15 each coordinate Zn(2+). Residues His15, Asn17, His65, 97–100 (TTPK), Asp160, and Gly190 each bind N(6)-methyl-AMP. Zn(2+) is bound at residue His217. Positions 220, 295, and 296 each coordinate N(6)-methyl-AMP. Residue Glu220 is the Proton donor of the active site. Residue Asp295 participates in Zn(2+) binding.

This sequence belongs to the metallo-dependent hydrolases superfamily. Adenosine and AMP deaminases family. As to quaternary structure, monomer. Zn(2+) serves as cofactor.

It is found in the cytoplasm. Its subcellular location is the cytosol. It catalyses the reaction N(6)-methyl-AMP + H2O + H(+) = IMP + methylamine. Functionally, catalyzes the hydrolysis of the free cytosolic methylated adenosine nucleotide N(6)-methyl-AMP (N6-mAMP) to produce inositol monophosphate (IMP) and methylamine. Is required for the catabolism of cytosolic N6-mAMP, which is derived from the degradation of mRNA containing N6-methylated adenine (m6A). Does not possess deaminase activity toward adenosine, AMP, N6-methyladenosine, or N6-mATP in vitro. The sequence is that of N6-mAMP deaminase from Arabidopsis thaliana (Mouse-ear cress).